A 539-amino-acid polypeptide reads, in one-letter code: RING finger protein 37 (539 aa).

The disordered stretch occupies residues 226-249 (PALPMESDCDPGGQSESQHSPCTL). The span at 239–249 (QSESQHSPCTL) shows a compositional bias: polar residues. Residues 258-338 (DVPEEFLDPI…DRFLLQHSIS (81 aa)) enclose the U-box domain. Disordered regions lie at residues 359–399 (LPSR…EPTA) and 456–479 (GTRG…VSGP). Positions 374–395 (HYSLGMSASSSATSPLFSPTTS) are enriched in low complexity. An RING-type zinc finger spans residues 481–526 (CASCKQAFSSYSTNEPVYQLPCGHLLCRPCLSEKQRSQPMMCTACR).

As to quaternary structure, interacts with UBE2L3. Interacts with VCP. In terms of tissue distribution, expressed in testis and placenta.

Its subcellular location is the nucleus. The catalysed reaction is S-ubiquitinyl-[E2 ubiquitin-conjugating enzyme]-L-cysteine + [acceptor protein]-L-lysine = [E2 ubiquitin-conjugating enzyme]-L-cysteine + N(6)-ubiquitinyl-[acceptor protein]-L-lysine.. The protein operates within protein modification; protein ubiquitination. Functionally, may have a ubiquitin-protein ligase activity acting as an E3 ubiquitin-protein ligase or as a ubiquitin-ubiquitin ligase promoting elongation of ubiquitin chains on substrates. The chain is RING finger protein 37 (Ubox5) from Mus musculus (Mouse).